An 829-amino-acid chain; its full sequence is Periplasmic nitrate reductase (829 aa).

Positions 1–30 (MNSPRPTPPPFAAAAAGLPILVRASNLVTE) are cleaved as a signal peptide. A 4Fe-4S Mo/W bis-MGD-type domain is found at 36–92 (LVWNKAPCRFCGTGCSVMVATRDGQVVATHGDIKAEVNRGINCVKGYFLSKIMYGSD). 4 residues coordinate [4Fe-4S] cluster: Cys-43, Cys-46, Cys-50, and Cys-78. Mo-bis(molybdopterin guanine dinucleotide)-binding positions include Lys-80, Gln-147, Asn-172, Cys-176, 209-216 (WGSNMAEM), 240-244 (STFEH), 259-261 (QTD), Met-370, Gln-374, Asn-480, 506-507 (SD), Lys-529, Asp-556, and 716-725 (TGRVLEHWHT). Position 792 (Phe-792) interacts with substrate. Mo-bis(molybdopterin guanine dinucleotide) is bound by residues Asn-800 and Lys-817.

It belongs to the prokaryotic molybdopterin-containing oxidoreductase family. NasA/NapA/NarB subfamily. As to quaternary structure, component of the periplasmic nitrate reductase NapAB complex composed of NapA and NapB. It depends on [4Fe-4S] cluster as a cofactor. The cofactor is Mo-bis(molybdopterin guanine dinucleotide).

Its subcellular location is the periplasm. The enzyme catalyses 2 Fe(II)-[cytochrome] + nitrate + 2 H(+) = 2 Fe(III)-[cytochrome] + nitrite + H2O. In terms of biological role, catalytic subunit of the periplasmic nitrate reductase complex NapAB. Receives electrons from NapB and catalyzes the reduction of nitrate to nitrite. The sequence is that of Periplasmic nitrate reductase from Pseudomonas aeruginosa (strain ATCC 15692 / DSM 22644 / CIP 104116 / JCM 14847 / LMG 12228 / 1C / PRS 101 / PAO1).